Reading from the N-terminus, the 314-residue chain is Large ribosomal subunit protein uL10 (314 aa).

A disordered region spans residues 285-314; that stretch reads GAAAGGAAAEEEKEEEEESDEEGGFGDLFG. Residues 293-308 show a composition bias toward acidic residues; it reads AEEEKEEEEESDEEGG. Position 303 is a phosphoserine; by CK1 (serine 303).

It belongs to the universal ribosomal protein uL10 family. Component of the large ribosomal subunit. P0 forms a pentameric complex by interaction with dimers of P1 and P2. Phosphorylated.

Its function is as follows. Ribosomal protein P0 is the functional equivalent of E.coli protein L10. The polypeptide is Large ribosomal subunit protein uL10 (Podospora anserina (Pleurage anserina)).